The chain runs to 216 residues: Imidazole glycerol phosphate synthase subunit HisH (216 aa).

The Glutamine amidotransferase type-1 domain maps to 2–216 (SVAIVDYGSG…LISNFLKWKP (215 aa)). Cys88 serves as the catalytic Nucleophile. Catalysis depends on residues His196 and Glu198.

In terms of assembly, heterodimer of HisH and HisF.

The protein localises to the cytoplasm. The catalysed reaction is 5-[(5-phospho-1-deoxy-D-ribulos-1-ylimino)methylamino]-1-(5-phospho-beta-D-ribosyl)imidazole-4-carboxamide + L-glutamine = D-erythro-1-(imidazol-4-yl)glycerol 3-phosphate + 5-amino-1-(5-phospho-beta-D-ribosyl)imidazole-4-carboxamide + L-glutamate + H(+). It carries out the reaction L-glutamine + H2O = L-glutamate + NH4(+). It participates in amino-acid biosynthesis; L-histidine biosynthesis; L-histidine from 5-phospho-alpha-D-ribose 1-diphosphate: step 5/9. IGPS catalyzes the conversion of PRFAR and glutamine to IGP, AICAR and glutamate. The HisH subunit catalyzes the hydrolysis of glutamine to glutamate and ammonia as part of the synthesis of IGP and AICAR. The resulting ammonia molecule is channeled to the active site of HisF. The protein is Imidazole glycerol phosphate synthase subunit HisH of Rhodopseudomonas palustris (strain ATCC BAA-98 / CGA009).